Here is a 739-residue protein sequence, read N- to C-terminus: Eukaryotic translation initiation factor 3 subunit B (739 aa).

An RRM domain is found at 39-125; the sequence is AFVVIDGLPV…HTLAVNKLTD (87 aa). 5 WD repeats span residues 191 to 229, 231 to 288, 457 to 498, 516 to 559, and 574 to 612; these read RDHW…KQKQ, PHPF…RSFV, SLKD…SFFA, IEKK…EKPE, and NEHF…HTFS.

This sequence belongs to the eIF-3 subunit B family. In terms of assembly, component of the eukaryotic translation initiation factor 3 (eIF-3) complex.

The protein localises to the cytoplasm. Functionally, RNA-binding component of the eukaryotic translation initiation factor 3 (eIF-3) complex, which is involved in protein synthesis of a specialized repertoire of mRNAs and, together with other initiation factors, stimulates binding of mRNA and methionyl-tRNAi to the 40S ribosome. The eIF-3 complex specifically targets and initiates translation of a subset of mRNAs involved in cell proliferation. The polypeptide is Eukaryotic translation initiation factor 3 subunit B (Coccidioides immitis (strain RS) (Valley fever fungus)).